The primary structure comprises 465 residues: Gamma-aminobutyric acid receptor subunit gamma-1 (465 aa).

Residues 1-35 (MGPLKAFLFSPFLLRSQSRGVRLVFLLLTLHLGNC) form the signal peptide. At 36-273 (VDKADDEDDE…FDLSRRMGYF (238 aa)) the chain is on the extracellular side. N-linked (GlcNAc...) asparagine glycans are attached at residues asparagine 50 and asparagine 127. Residues cysteine 188 and cysteine 202 are joined by a disulfide bond. Asparagine 245 is a glycosylation site (N-linked (GlcNAc...) asparagine). A helical membrane pass occupies residues 274-294 (TIQTYIPCILTVVLSWVSFWI). The Cytoplasmic portion of the chain corresponds to 295–300 (NKDAVP). Residues 301–320 (ARTSLGITTVLTMTTLSTIA) form a helical membrane-spanning segment. Residues 321–328 (RKSLPKVS) lie on the Extracellular side of the membrane. Residues 329 to 349 (YVTAMDLFVSVCFIFVFAALM) traverse the membrane as a helical segment. The Cytoplasmic portion of the chain corresponds to 350–444 (EYGTLHYFTS…RIAKIDSYSR (95 aa)). The chain crosses the membrane as a helical span at residues 445–465 (IFFPTAFALFNLVYWVGYLYL).

This sequence belongs to the ligand-gated ion channel (TC 1.A.9) family. Gamma-aminobutyric acid receptor (TC 1.A.9.5) subfamily. GABRG1 sub-subfamily. In terms of assembly, heteropentamer, formed by a combination of alpha (GABRA1-6), beta (GABRB1-3), gamma (GABRG1-3), delta (GABRD), epsilon (GABRE), rho (GABRR1-3), pi (GABRP) and theta (GABRQ) chains, each subunit exhibiting distinct physiological and pharmacological properties. In terms of processing, may be palmitoylated.

The protein localises to the postsynaptic cell membrane. It localises to the cell membrane. The enzyme catalyses chloride(in) = chloride(out). Functionally, gamma subunit of the heteropentameric ligand-gated chloride channel gated by gamma-aminobutyric acid (GABA), a major inhibitory neurotransmitter in the brain. GABA-gated chloride channels, also named GABA(A) receptors (GABAAR), consist of five subunits arranged around a central pore and contain GABA active binding site(s) located at the alpha and beta subunit interface(s). When activated by GABA, GABAARs selectively allow the flow of chloride anions across the cell membrane down their electrochemical gradient. Chloride influx into the postsynaptic neuron following GABAAR opening decreases the neuron ability to generate a new action potential, thereby reducing nerve transmission. This is Gamma-aminobutyric acid receptor subunit gamma-1 from Homo sapiens (Human).